Reading from the N-terminus, the 172-residue chain is DCC family protein At1g52590, chloroplastic (172 aa).

The N-terminal 25 residues, 1-25 (MAILIPASFGRLTITSRAQVRVRVS), are a transit peptide targeting the chloroplast.

Belongs to the DCC thiol-disulfide oxidoreductase family.

The protein resides in the plastid. Its subcellular location is the chloroplast. The chain is DCC family protein At1g52590, chloroplastic from Arabidopsis thaliana (Mouse-ear cress).